Here is a 306-residue protein sequence, read N- to C-terminus: ATP-dependent (S)-NAD(P)H-hydrate dehydratase (306 aa).

The region spanning 4-300 (LIDLFKPMIP…NQISNGFEDL (297 aa)) is the YjeF C-terminal domain. (6S)-NADPHX is bound by residues Gly104 and 157-163 (NFVEFKS). ATP is bound by residues 197-201 (KGKED) and 216-225 (GMPRRCGGQG). Asp226 serves as a coordination point for (6S)-NADPHX.

This sequence belongs to the NnrD/CARKD family. Requires Mg(2+) as cofactor.

The enzyme catalyses (6S)-NADHX + ATP = ADP + phosphate + NADH + H(+). The catalysed reaction is (6S)-NADPHX + ATP = ADP + phosphate + NADPH + H(+). Its function is as follows. Catalyzes the dehydration of the S-form of NAD(P)HX at the expense of ATP, which is converted to ADP. Together with NAD(P)HX epimerase, which catalyzes the epimerization of the S- and R-forms, the enzyme allows the repair of both epimers of NAD(P)HX, a damaged form of NAD(P)H that is a result of enzymatic or heat-dependent hydration. The chain is ATP-dependent (S)-NAD(P)H-hydrate dehydratase from Dictyostelium discoideum (Social amoeba).